The sequence spans 366 residues: Chorismate synthase (366 aa).

Arginine 48 serves as a coordination point for NADP(+). FMN contacts are provided by residues 125 to 127 (RSS), glycine 283, 298 to 302 (KPTPS), and arginine 324.

It belongs to the chorismate synthase family. Homotetramer. FMNH2 is required as a cofactor.

It carries out the reaction 5-O-(1-carboxyvinyl)-3-phosphoshikimate = chorismate + phosphate. It functions in the pathway metabolic intermediate biosynthesis; chorismate biosynthesis; chorismate from D-erythrose 4-phosphate and phosphoenolpyruvate: step 7/7. Catalyzes the anti-1,4-elimination of the C-3 phosphate and the C-6 proR hydrogen from 5-enolpyruvylshikimate-3-phosphate (EPSP) to yield chorismate, which is the branch point compound that serves as the starting substrate for the three terminal pathways of aromatic amino acid biosynthesis. This reaction introduces a second double bond into the aromatic ring system. In Lachnospira eligens (strain ATCC 27750 / DSM 3376 / VPI C15-48 / C15-B4) (Eubacterium eligens), this protein is Chorismate synthase.